We begin with the raw amino-acid sequence, 333 residues long: Complement C1q and tumor necrosis factor-related protein 9 (333 aa).

Residues 1 to 19 form the signal peptide; it reads MRIWWLLLVMGACTRSVFS. The disordered stretch occupies residues 22–194; the sequence is TCRQGHSGIP…GDRGEKGKVG (173 aa). 3 Collagen-like domains span residues 24–82, 84–130, and 134–193; these read RQGH…DGRV, AKGI…KGEV, and GPEG…KGKV. Residues Pro31, Pro34, and Pro40 each carry the 4-hydroxyproline modification. Over residues 42–57 the composition is skewed to basic and acidic residues; that stretch reads RDGRDGAKGDKGDAGE. Pro58, Pro61, and Pro64 each carry 4-hydroxyproline. Residues 67 to 88 are compositionally biased toward basic and acidic residues; it reads DGIRGEKGEPGADGRVEAKGIK. Residue Lys73 is modified to 5-hydroxylysine. An O-linked (Gal...) hydroxylysine glycan is attached at Lys73. 4-hydroxyproline occurs at positions 76 and 115. Position 127 is a 5-hydroxylysine (Lys127). A glycan (O-linked (Gal...) hydroxylysine) is linked at Lys127. A 4-hydroxyproline mark is found at Pro151, Pro160, and Pro175. A compositionally biased stretch (basic and acidic residues) spans 183 to 193; sequence WKGDRGEKGKV. Residues 197-333 form the C1q domain; that stretch reads PLVPKSAFTV…FTGFLLFSSS (137 aa).

As to quaternary structure, multimers (predominantly trimers). Interacts with ADIPOQ via the C1q domain to form a heterotrimeric complex. The isomeric forms of the hydroxylated amino acids could not be determined in the mass-spectrometric methods reported in PubMed:18787108 but are assumed on the basis of their occurrence in collagen-like domains. As to expression, expressed predominantly in adipose tissue. Females express higher levels than males.

The protein resides in the secreted. Functionally, probable adipokine. Activates AMPK, AKT, and p44/42 MAPK signaling pathways. The protein is Complement C1q and tumor necrosis factor-related protein 9 (C1qtnf9) of Mus musculus (Mouse).